The sequence spans 109 residues: Photosystem II reaction center Psb28 protein (109 aa).

Belongs to the Psb28 family. Part of the photosystem II complex.

It localises to the plastid. Its subcellular location is the chloroplast thylakoid membrane. In Cyanidioschyzon merolae (strain NIES-3377 / 10D) (Unicellular red alga), this protein is Photosystem II reaction center Psb28 protein.